We begin with the raw amino-acid sequence, 711 residues long: Exotoxin translocation ATP-binding protein PaxB (711 aa).

The 129-residue stretch at 1-129 (MEPLMSFKQK…QVFQGNVILL (129 aa)) folds into the Peptidase C39 domain. The next 5 helical transmembrane spans lie at 157–177 (IFVE…ITPL), 195–215 (LNVI…LSGL), 273–293 (ALTS…MWYY), 299–319 (IVIL…SPIL), and 392–412 (VMII…LSIG). One can recognise an ABC transmembrane type-1 domain in the interval 158–440 (FVEVMIVSIF…LAQLWQDFQQ (283 aa)). Residues 472 to 707 (VTFKNIRFRY…KDGLYYYLNQ (236 aa)) form the ABC transporter domain. Position 506–513 (506–513 (GRSGSGKS)) interacts with ATP.

This sequence belongs to the ABC transporter superfamily. Protein-1 exporter (TC 3.A.1.109) family. Homodimer.

It is found in the cell inner membrane. The enzyme catalyses ATP + H2O + proteinSide 1 = ADP + phosphate + proteinSide 2.. Its function is as follows. Part of the ABC transporter complex PaxBD involved in PaxA export. Transmembrane domains (TMD) form a pore in the inner membrane and the ATP-binding domain (NBD) is responsible for energy generation. This chain is Exotoxin translocation ATP-binding protein PaxB (paxB), found in Pasteurella aerogenes.